A 386-amino-acid polypeptide reads, in one-letter code: Agamous-like MADS-box protein AGL30 (386 aa).

In terms of domain architecture, MADS-box spans 1–53; that stretch reads MGRVKLKIKKLENTNGRQSTFAKRKNGILKKANELSILCDIDIVLLMFSPTGK. The disordered stretch occupies residues 341–360; the sequence is PDSSAYNDNTNQTRFGSSSS. A compositionally biased stretch (polar residues) spans 344-356; that stretch reads SAYNDNTNQTRFG.

In terms of assembly, forms heterodimers with AGL66 and AGL104. In terms of tissue distribution, expressed in pollen.

Its subcellular location is the nucleus. Its function is as follows. Probable transcription factor that forms heterodimers with the MADS-box proteins AGL66 and AGL104 and is involved in the regulation of pollen maturation at the late stages of pollen development and pollen tube growth. The chain is Agamous-like MADS-box protein AGL30 from Arabidopsis thaliana (Mouse-ear cress).